The sequence spans 233 residues: tRNA (guanine-N(1)-)-methyltransferase (233 aa).

S-adenosyl-L-methionine contacts are provided by residues glycine 113 and 133 to 138 (IGDYVL).

This sequence belongs to the RNA methyltransferase TrmD family. Homodimer.

The protein localises to the cytoplasm. The catalysed reaction is guanosine(37) in tRNA + S-adenosyl-L-methionine = N(1)-methylguanosine(37) in tRNA + S-adenosyl-L-homocysteine + H(+). Functionally, specifically methylates guanosine-37 in various tRNAs. This chain is tRNA (guanine-N(1)-)-methyltransferase, found in Ruminiclostridium cellulolyticum (strain ATCC 35319 / DSM 5812 / JCM 6584 / H10) (Clostridium cellulolyticum).